We begin with the raw amino-acid sequence, 737 residues long: DNA polymerase iota (737 aa).

One can recognise a UmuC domain in the interval 17-231; the sequence is IIHLDMDYFY…GDLKRVTGIG (215 aa). Asp21 serves as a coordination point for Mg(2+). A 2'-deoxyribonucleoside 5'-triphosphate is bound by residues Tyr26 and Arg58. Residue Asp113 coordinates Mg(2+). Residue Glu114 is part of the active site. DNA-binding regions lie at residues 212–277 and 288–413; these read TYAE…FGRD and KTIG…SKFQ. Disordered stretches follow at residues 443–464, 482–515, 557–581, and 607–643; these read TSLTSPTAESPTSDECAFRSSP, SPVPMLLDNGSESAATNSDFSDFSETEVEPSPKK, DSEKDFPMSTTPSTSTSAPAPRFRT, and LSSNASSTASSPLPSPMDDSIAMSAPSTTTLPFPSPT. Polar residues predominate over residues 491 to 502; sequence GSESAATNSDFS. Composition is skewed to low complexity over residues 563–577, 607–618, and 632–643; these read PMSTTPSTSTSAPAP, LSSNASSTASSP, and PSTTTLPFPSPT. The Ubiquitin-binding (UBM) signature appears at 669-686; the sequence is VDAEVFKELPVELQTELI.

The protein belongs to the DNA polymerase type-Y family. The cofactor is Mg(2+). It depends on Mn(2+) as a cofactor.

It localises to the nucleus. It catalyses the reaction DNA(n) + a 2'-deoxyribonucleoside 5'-triphosphate = DNA(n+1) + diphosphate. In terms of biological role, error-prone DNA polymerase specifically involved in DNA repair. Plays an important role in translesion synthesis, where the normal high-fidelity DNA polymerases cannot proceed and DNA synthesis stalls. Favors Hoogsteen base-pairing in the active site. Inserts the correct base with higher fidelity opposite an adenosine template. Exhibits low fidelity and efficiency opposite a thymidine template, where it will preferentially insert guanosine. Forms a Schiff base with 5'-deoxyribose phosphate at abasic sites, but may not have lyase activity. This Drosophila melanogaster (Fruit fly) protein is DNA polymerase iota.